A 1035-amino-acid polypeptide reads, in one-letter code: DNA polymerase catalytic subunit (1035 aa).

This sequence belongs to the DNA polymerase type-B family.

The protein resides in the host nucleus. It carries out the reaction DNA(n) + a 2'-deoxyribonucleoside 5'-triphosphate = DNA(n+1) + diphosphate. In Macaca mulatta (Rhesus macaque), this protein is DNA polymerase catalytic subunit (UL54).